The primary structure comprises 182 residues: UPF0215 protein Pcal_0119 (182 aa).

Belongs to the UPF0215 family.

The chain is UPF0215 protein Pcal_0119 from Pyrobaculum calidifontis (strain DSM 21063 / JCM 11548 / VA1).